Here is a 421-residue protein sequence, read N- to C-terminus: MHDAVTRPTPPSDATAWPRRQTHAVQIGGVTVGGGKPVVVQSMTNTDTSDVASSVKQVAELWRAGSEMVRLTVNTVEAAAAIPRIVDKLAMMGIDVPLIGDFHYNGHQLLTAEPACAEALAKYRINPGNVGFGKKKDLQFAQLIEFAIRYNKPVRIGANWGSLDQALAAKLMDENNLREQPWDAGRVLREALIRSALDSAEQAVELGLPRDRIVLSAKVSGVQELIAVYRDLAQRSDFALHLGLTEAGIGSKGIVASSAALGVLLQEGIGDTIRISLTPEPGQSRTQEVIVAQELLQTTGQRAFTPLVTACPGCGRTTSEFFQELAKVVQNHVREKMPLWKIHHPGAENMTLAVMGCIVNGPGESRHANIGISLPGTGETPAAPVFVDGEKKVTLRGDNIAQEFVALIDDYVEHTYVRSAG.

The [4Fe-4S] cluster site is built by Cys-311, Cys-314, Cys-357, and Glu-364.

Belongs to the IspG family. The cofactor is [4Fe-4S] cluster.

It carries out the reaction (2E)-4-hydroxy-3-methylbut-2-enyl diphosphate + oxidized [flavodoxin] + H2O + 2 H(+) = 2-C-methyl-D-erythritol 2,4-cyclic diphosphate + reduced [flavodoxin]. Its pathway is isoprenoid biosynthesis; isopentenyl diphosphate biosynthesis via DXP pathway; isopentenyl diphosphate from 1-deoxy-D-xylulose 5-phosphate: step 5/6. In terms of biological role, converts 2C-methyl-D-erythritol 2,4-cyclodiphosphate (ME-2,4cPP) into 1-hydroxy-2-methyl-2-(E)-butenyl 4-diphosphate. The protein is 4-hydroxy-3-methylbut-2-en-1-yl diphosphate synthase (flavodoxin) of Stenotrophomonas maltophilia (strain K279a).